We begin with the raw amino-acid sequence, 600 residues long: Dihydroxy-acid dehydratase (600 aa).

A Mg(2+)-binding site is contributed by D82. C123 lines the [2Fe-2S] cluster pocket. Mg(2+) contacts are provided by D124 and K125. K125 carries the post-translational modification N6-carboxylysine. C192 provides a ligand contact to [2Fe-2S] cluster. Mg(2+) is bound at residue E489. Residue S515 is the Proton acceptor of the active site.

It belongs to the IlvD/Edd family. As to quaternary structure, homodimer. [2Fe-2S] cluster is required as a cofactor. Mg(2+) serves as cofactor.

It carries out the reaction (2R)-2,3-dihydroxy-3-methylbutanoate = 3-methyl-2-oxobutanoate + H2O. The catalysed reaction is (2R,3R)-2,3-dihydroxy-3-methylpentanoate = (S)-3-methyl-2-oxopentanoate + H2O. The protein operates within amino-acid biosynthesis; L-isoleucine biosynthesis; L-isoleucine from 2-oxobutanoate: step 3/4. Its pathway is amino-acid biosynthesis; L-valine biosynthesis; L-valine from pyruvate: step 3/4. Functionally, functions in the biosynthesis of branched-chain amino acids. Catalyzes the dehydration of (2R,3R)-2,3-dihydroxy-3-methylpentanoate (2,3-dihydroxy-3-methylvalerate) into 2-oxo-3-methylpentanoate (2-oxo-3-methylvalerate) and of (2R)-2,3-dihydroxy-3-methylbutanoate (2,3-dihydroxyisovalerate) into 2-oxo-3-methylbutanoate (2-oxoisovalerate), the penultimate precursor to L-isoleucine and L-valine, respectively. The sequence is that of Dihydroxy-acid dehydratase from Bacteroides fragilis (strain YCH46).